A 408-amino-acid polypeptide reads, in one-letter code: MKFVDEVSIRVKAGDGGNGCMSFRREKFIENGGPNGGDGGDGGSVYMIADENLNTLVDYRYTRHHEAQRGSNGGSTDCTGKKGEDLFLRVPVGTTVIDASTQEVIGDLVTPGQKLMVAQGGWHGLGNTRFKSSTNRAPRQTTPGKPGEQRDLKMEMKVLADVGLLGLPNAGKSTFIRSVSAAKPKVADYPFTTLVPNLGVVSVDRWKSFVIADIPGLIEGASEGAGLGIRFLKHLARTRVLLHLVDIAPLDESSPADAAEVIVNELTRFSPSLAERERWLVLNKADMVMDDERDERVQEVIDRLEWEGPVYVISAISKQGTDKLSHDLMRYLEDRADRLANDPAYAEELADLDQRIEDEARAQLQALDDARTLRRTGVKSVHDIGDDDGWDDDFEDDEDGPEIIYVRD.

One can recognise an Obg domain in the interval Met-1 to Leu-159. The disordered stretch occupies residues Asn-127 to Glu-148. Residues Arg-129–Pro-143 are compositionally biased toward polar residues. The OBG-type G domain maps to Ala-160 to Glu-333. Residues Gly-166–Ser-173, Phe-191–Val-195, Asp-213–Gly-216, Asn-283–Asp-286, and Ser-314–Ile-316 contribute to the GTP site. Residues Ser-173 and Thr-193 each coordinate Mg(2+). Residues Gly-385 to Pro-401 show a composition bias toward acidic residues. The disordered stretch occupies residues Gly-385 to Asp-408.

Belongs to the TRAFAC class OBG-HflX-like GTPase superfamily. OBG GTPase family. In terms of assembly, monomer. The cofactor is Mg(2+).

The protein resides in the cytoplasm. An essential GTPase which binds GTP, GDP and possibly (p)ppGpp with moderate affinity, with high nucleotide exchange rates and a fairly low GTP hydrolysis rate. Plays a role in control of the cell cycle, stress response, ribosome biogenesis and in those bacteria that undergo differentiation, in morphogenesis control. The sequence is that of GTPase Obg from Pseudomonas putida (strain ATCC 700007 / DSM 6899 / JCM 31910 / BCRC 17059 / LMG 24140 / F1).